The following is a 289-amino-acid chain: Phosphatidylglycerol--prolipoprotein diacylglyceryl transferase (289 aa).

Transmembrane regions (helical) follow at residues 23-43 (ALHWYGLMYLVGFVFAMWLAV), 61-81 (LLYMGFLGVFVGGRLGYVLFY), 99-119 (GGMSFHGGLMGVICVMLWFAH), 125-145 (FFQVADFIAPLIPFGLGAGRL), 199-219 (SQLYQMMLEGVALFIILNLFI), 226-246 (GSVSGLFLIGYGTFRIITEFF), and 259-279 (LFSMGQILSLPMVIAGILMMV). A 1,2-diacyl-sn-glycero-3-phospho-(1'-sn-glycerol) is bound at residue arginine 144.

This sequence belongs to the Lgt family.

Its subcellular location is the cell inner membrane. The catalysed reaction is L-cysteinyl-[prolipoprotein] + a 1,2-diacyl-sn-glycero-3-phospho-(1'-sn-glycerol) = an S-1,2-diacyl-sn-glyceryl-L-cysteinyl-[prolipoprotein] + sn-glycerol 1-phosphate + H(+). Its pathway is protein modification; lipoprotein biosynthesis (diacylglyceryl transfer). In terms of biological role, catalyzes the transfer of the diacylglyceryl group from phosphatidylglycerol to the sulfhydryl group of the N-terminal cysteine of a prolipoprotein, the first step in the formation of mature lipoproteins. The chain is Phosphatidylglycerol--prolipoprotein diacylglyceryl transferase from Pectobacterium carotovorum subsp. carotovorum (strain PC1).